The sequence spans 83 residues: Three-finger toxin MALT0066C (83 aa).

Positions 1–21 are cleaved as a signal peptide; that stretch reads MKTLLLTLVVVTIVCLDFGHT. 4 disulfide bridges follow: C24/C45, C38/C62, C64/C75, and C76/C81.

This sequence belongs to the three-finger toxin family. Short-chain subfamily. Type I alpha-neurotoxin sub-subfamily. As to quaternary structure, dimer. In terms of tissue distribution, expressed by the venom gland.

It is found in the secreted. Its function is as follows. Binds to muscle nicotinic acetylcholine receptor (nAChR) and inhibit acetylcholine from binding to the receptor, thereby impairing neuromuscular transmission. The chain is Three-finger toxin MALT0066C from Micrurus altirostris (Uruguayan coral snake).